The chain runs to 463 residues: Polyadenylate-binding protein-interacting protein 1 (463 aa).

The disordered stretch occupies residues 1-86 (MSDGFERAPG…HKRTSPAAQL (86 aa)). The MIF4G domain occupies 145–362 (TEYVQDFLNH…LKLVELRSSN (218 aa)). A disordered region spans residues 420–442 (RDYDENGTDGGDSYFEDDDDNEM). Residues 433 to 442 (YFEDDDDNEM) show a composition bias toward acidic residues.

As to quaternary structure, interacts with the RRM1-RRM2 and C-terminal regions of epabp.

Its subcellular location is the cytoplasm. In terms of biological role, acts as a coactivator in the regulation of translation initiation of poly(A)-containing mRNAs. This is Polyadenylate-binding protein-interacting protein 1 from Xenopus laevis (African clawed frog).